A 214-amino-acid chain; its full sequence is MANRVDHEYDYLFKIVLIGDSGVGKSNILSRFTRNEFCLESKSTIGVEFATRTLQVEGKTVKAQIWDTAGQERYRAITSAYYRGAVGALLVYDITKRQTFDNVQRWLRELRDHADSNIVIMMAGNKSDLKHLRAVSEEDGQALAEKEGLSFLETSALEAVNIEKAFQTILTEIYHIISKKALAAQEASSNLPGQGTTINVADASANQRRSCCST.

19–26 provides a ligand contact to GTP; it reads GDSGVGKS. The Effector region signature appears at 41–49; that stretch reads SKSTIGVEF. GTP is bound by residues 67–71 and 125–128; these read DTAGQ and NKSD. S-geranylgeranyl cysteine attachment occurs at residues Cys211 and Cys212.

It belongs to the small GTPase superfamily. Rab family.

The protein resides in the cell membrane. In Beta vulgaris (Sugar beet), this protein is Ras-related protein Rab2BV (RAB2BV).